A 279-amino-acid polypeptide reads, in one-letter code: Putative pyruvate, phosphate dikinase regulatory protein (279 aa).

An ADP-binding site is contributed by 153-160 (GVSRTSKT).

It belongs to the pyruvate, phosphate/water dikinase regulatory protein family. PDRP subfamily.

The catalysed reaction is N(tele)-phospho-L-histidyl/L-threonyl-[pyruvate, phosphate dikinase] + ADP = N(tele)-phospho-L-histidyl/O-phospho-L-threonyl-[pyruvate, phosphate dikinase] + AMP + H(+). It catalyses the reaction N(tele)-phospho-L-histidyl/O-phospho-L-threonyl-[pyruvate, phosphate dikinase] + phosphate + H(+) = N(tele)-phospho-L-histidyl/L-threonyl-[pyruvate, phosphate dikinase] + diphosphate. Bifunctional serine/threonine kinase and phosphorylase involved in the regulation of the pyruvate, phosphate dikinase (PPDK) by catalyzing its phosphorylation/dephosphorylation. The chain is Putative pyruvate, phosphate dikinase regulatory protein from Bradyrhizobium diazoefficiens (strain JCM 10833 / BCRC 13528 / IAM 13628 / NBRC 14792 / USDA 110).